A 126-amino-acid chain; its full sequence is Glycine cleavage system H protein (126 aa).

One can recognise a Lipoyl-binding domain in the interval 24–105; that stretch reads TLTVGITDHA…AYGVWLFKIK (82 aa). At K65 the chain carries N6-lipoyllysine.

This sequence belongs to the GcvH family. As to quaternary structure, the glycine cleavage system is composed of four proteins: P, T, L and H. The cofactor is (R)-lipoate.

Functionally, the glycine cleavage system catalyzes the degradation of glycine. The H protein shuttles the methylamine group of glycine from the P protein to the T protein. The protein is Glycine cleavage system H protein of Burkholderia ambifaria (strain MC40-6).